A 76-amino-acid chain; its full sequence is uncharacterized protein (76 aa).

This is an uncharacterized protein from Saccharomyces cerevisiae (strain ATCC 204508 / S288c) (Baker's yeast).